The sequence spans 81 residues: Large ribosomal subunit protein bL31B (81 aa).

This sequence belongs to the bacterial ribosomal protein bL31 family. Type B subfamily. In terms of assembly, part of the 50S ribosomal subunit.

The protein is Large ribosomal subunit protein bL31B of Lactobacillus helveticus (strain DPC 4571).